We begin with the raw amino-acid sequence, 304 residues long: Large ribosomal subunit protein uL2 (304 aa).

Residues 246–282 (HTRGTAMNPVDHPHGGGEGRTRGKHPESPWGWKTKGY) form a disordered region. A compositionally biased stretch (basic and acidic residues) spans 256 to 272 (DHPHGGGEGRTRGKHPE).

This sequence belongs to the universal ribosomal protein uL2 family. In terms of assembly, part of the 50S ribosomal subunit. Forms a bridge to the 30S subunit in the 70S ribosome.

Functionally, one of the primary rRNA binding proteins. Required for association of the 30S and 50S subunits to form the 70S ribosome, for tRNA binding and peptide bond formation. It has been suggested to have peptidyltransferase activity; this is somewhat controversial. Makes several contacts with the 16S rRNA in the 70S ribosome. The sequence is that of Large ribosomal subunit protein uL2 from Aquifex aeolicus (strain VF5).